Reading from the N-terminus, the 174-residue chain is V-type proton ATPase catalytic subunit A (174 aa).

Belongs to the ATPase alpha/beta chains family. V-ATPase is a heteromultimeric enzyme made up of two complexes: the ATP-hydrolytic V1 complex and the proton translocation V0 complex. The V1 complex consists of three catalytic AB heterodimers that form a heterohexamer, three peripheral stalks each consisting of EG heterodimers, one central rotor including subunits D and F, and the regulatory subunits C and H. The proton translocation complex V0 consists of the proton transport subunit a, a ring of proteolipid subunits c9c'', rotary subunit d, subunits e and f, and the accessory subunits ATP6AP1/Ac45 and ATP6AP2/PRR. Interacts with the V0 complex V-ATPase subunit a4 ATP6V0A4. Interacts with WFS1. Interacts with alpha-crystallin B chain/CRYAB and with MTOR, forming a ternary complex.

The protein localises to the cytoplasm. It is found in the cytosol. It localises to the cytoplasmic vesicle. The protein resides in the secretory vesicle. Its subcellular location is the clathrin-coated vesicle membrane. The protein localises to the lysosome. It carries out the reaction ATP + H2O + 4 H(+)(in) = ADP + phosphate + 5 H(+)(out). Its activity is regulated as follows. ATP hydrolysis occurs at the interface between the nucleotide-binding domains of subunits A and B. ATP hydrolysis triggers a conformational change in the subunits D and F, which induces a shift of subunit d. The c-ring is subsequently rotated and results in a continuous proton translocation across the membrane. Functionally, catalytic subunit of the V1 complex of vacuolar(H+)-ATPase (V-ATPase), a multisubunit enzyme composed of a peripheral complex (V1) that hydrolyzes ATP and a membrane integral complex (V0) that translocates protons. V-ATPase is responsible for acidifying and maintaining the pH of intracellular compartments and in some cell types, is targeted to the plasma membrane, where it is responsible for acidifying the extracellular environment. In aerobic conditions, involved in intracellular iron homeostasis, thus triggering the activity of Fe(2+) prolyl hydroxylase (PHD) enzymes, and leading to HIF1A hydroxylation and subsequent proteasomal degradation. May play a role in neurite development and synaptic connectivity. The chain is V-type proton ATPase catalytic subunit A from Mesocricetus auratus (Golden hamster).